The primary structure comprises 352 residues: Aspartic protease Bla g 2 (352 aa).

Positions 1–19 (MIGLKLVTVLFAVATITHA) are cleaved as a signal peptide. A propeptide spans 20 to 24 (AELQR) (removed in mature form). The Peptidase A1 domain maps to 39 to 346 (YAGITKIGNQ…NWENKTMGFG (308 aa)). The active site involves Asp-55. Intrachain disulfides connect Cys-59–Cys-151, Cys-68–Cys-73, and Cys-75–Cys-136. Asn-117 carries an N-linked (GlcNAc...) asparagine glycan. Residues His-178 and His-186 each contribute to the Zn(2+) site. Residue Asp-239 is part of the active site. Disulfide bonds link Cys-261–Cys-272 and Cys-276–Cys-309. N-linked (GlcNAc...) asparagine glycosylation occurs at Asn-295. Zn(2+)-binding residues include Asp-326 and Asp-330. N-linked (GlcNAc...) asparagine glycosylation occurs at Asn-340.

Belongs to the peptidase A1 family. In terms of assembly, homodimer.

Functions as a digestive enzyme in the cockroach. This chain is Aspartic protease Bla g 2, found in Blattella germanica (German cockroach).